A 303-amino-acid chain; its full sequence is Nucleotide-binding protein SAB0719 (303 aa).

18-25 (GLSGAGKS) lines the ATP pocket. 69-72 (DLRG) contributes to the GTP binding site.

The protein belongs to the RapZ-like family.

Displays ATPase and GTPase activities. The polypeptide is Nucleotide-binding protein SAB0719 (Staphylococcus aureus (strain bovine RF122 / ET3-1)).